Consider the following 253-residue polypeptide: Vitamin B12 import ATP-binding protein BtuD (253 aa).

The region spanning 4–236 (LQLNNVSVGT…DVLSQVFEVD (233 aa)) is the ABC transporter domain. Residue 32–39 (GPNGAGKS) participates in ATP binding.

It belongs to the ABC transporter superfamily. Vitamin B12 importer (TC 3.A.1.13.1) family. As to quaternary structure, the complex is composed of two ATP-binding proteins (BtuD), two transmembrane proteins (BtuC) and a solute-binding protein (BtuF).

The protein localises to the cell inner membrane. The catalysed reaction is an R-cob(III)alamin(out) + ATP + H2O = an R-cob(III)alamin(in) + ADP + phosphate + H(+). Its function is as follows. Part of the ABC transporter complex BtuCDF involved in vitamin B12 import. Responsible for energy coupling to the transport system. This is Vitamin B12 import ATP-binding protein BtuD from Yersinia pestis.